The sequence spans 282 residues: Bifunctional protein FolD (282 aa).

NADP(+) is bound by residues 164-166, I189, and I230; that span reads GAS.

It belongs to the tetrahydrofolate dehydrogenase/cyclohydrolase family. In terms of assembly, homodimer.

It catalyses the reaction (6R)-5,10-methylene-5,6,7,8-tetrahydrofolate + NADP(+) = (6R)-5,10-methenyltetrahydrofolate + NADPH. It carries out the reaction (6R)-5,10-methenyltetrahydrofolate + H2O = (6R)-10-formyltetrahydrofolate + H(+). Its pathway is one-carbon metabolism; tetrahydrofolate interconversion. In terms of biological role, catalyzes the oxidation of 5,10-methylenetetrahydrofolate to 5,10-methenyltetrahydrofolate and then the hydrolysis of 5,10-methenyltetrahydrofolate to 10-formyltetrahydrofolate. In Campylobacter jejuni (strain RM1221), this protein is Bifunctional protein FolD.